Reading from the N-terminus, the 318-residue chain is Ribosomal RNA small subunit methyltransferase H (318 aa).

Residues 37–39 (GGH), D56, Y83, D104, and Q111 contribute to the S-adenosyl-L-methionine site. Positions 293 to 318 (EEEIAENRRAAPARLRGAQRIREDAE) are disordered.

The protein belongs to the methyltransferase superfamily. RsmH family.

The protein localises to the cytoplasm. It carries out the reaction cytidine(1402) in 16S rRNA + S-adenosyl-L-methionine = N(4)-methylcytidine(1402) in 16S rRNA + S-adenosyl-L-homocysteine + H(+). Its function is as follows. Specifically methylates the N4 position of cytidine in position 1402 (C1402) of 16S rRNA. The protein is Ribosomal RNA small subunit methyltransferase H of Streptomyces avermitilis (strain ATCC 31267 / DSM 46492 / JCM 5070 / NBRC 14893 / NCIMB 12804 / NRRL 8165 / MA-4680).